The primary structure comprises 371 residues: N-acetyldiaminopimelate deacetylase (371 aa).

Residue aspartate 68 is part of the active site. The active-site Proton acceptor is the glutamate 127.

Belongs to the peptidase M20A family. N-acetyldiaminopimelate deacetylase subfamily.

It catalyses the reaction N-acetyl-(2S,6S)-2,6-diaminopimelate + H2O = (2S,6S)-2,6-diaminopimelate + acetate. It participates in amino-acid biosynthesis; L-lysine biosynthesis via DAP pathway; LL-2,6-diaminopimelate from (S)-tetrahydrodipicolinate (acetylase route): step 3/3. Catalyzes the conversion of N-acetyl-diaminopimelate to diaminopimelate and acetate. The chain is N-acetyldiaminopimelate deacetylase from Halalkalibacterium halodurans (strain ATCC BAA-125 / DSM 18197 / FERM 7344 / JCM 9153 / C-125) (Bacillus halodurans).